The following is a 513-amino-acid chain: ATP synthase subunit alpha (513 aa).

Position 169–176 (169–176) interacts with ATP; it reads GDRQTGKT.

It belongs to the ATPase alpha/beta chains family. In terms of assembly, F-type ATPases have 2 components, CF(1) - the catalytic core - and CF(0) - the membrane proton channel. CF(1) has five subunits: alpha(3), beta(3), gamma(1), delta(1), epsilon(1). CF(0) has three main subunits: a(1), b(2) and c(9-12). The alpha and beta chains form an alternating ring which encloses part of the gamma chain. CF(1) is attached to CF(0) by a central stalk formed by the gamma and epsilon chains, while a peripheral stalk is formed by the delta and b chains.

It is found in the cell inner membrane. The enzyme catalyses ATP + H2O + 4 H(+)(in) = ADP + phosphate + 5 H(+)(out). Functionally, produces ATP from ADP in the presence of a proton gradient across the membrane. The alpha chain is a regulatory subunit. The polypeptide is ATP synthase subunit alpha (Methylobacillus flagellatus (strain ATCC 51484 / DSM 6875 / VKM B-1610 / KT)).